A 363-amino-acid polypeptide reads, in one-letter code: MAAARATLPLPRVPAPSPRPQLRPFPSLPARRGAVACGAGSAAAGVAASLRLGDVIEAQQFDRDALTEIFEVAREMEALERGSSSRGAGRSRVLEGYLMATLFYEPSTRTRLSFEAAMRRLGGEVLTTENAREFSSAAKGETLEDTIRTVEGYSDIIVLRHFESGAARRAAATADIPVINAGDGPGQHPTQALLDVYSIEREIGTLDGIKLGLVGDLANGRTVRSLAYLIAKYQNIKIYFVSPDVVKMKDDIKEYLTSQGVEWEESSDLLEVASKCDVIYQTRIQKERFGERIDLYEAARGKYIVDKKVLDVLPKHAVIMHPLPRLDEITIDVDSDPRAAYFRQAKNGLYIRMALLKLLLVGR.

The segment at 1–21 (MAAARATLPLPRVPAPSPRPQ) is disordered. The N-terminal 36 residues, 1 to 36 (MAAARATLPLPRVPAPSPRPQLRPFPSLPARRGAVA), are a transit peptide targeting the chloroplast. Positions 11 to 21 (PRVPAPSPRPQ) are enriched in pro residues. Carbamoyl phosphate contacts are provided by R109 and T110. UMP is bound by residues R109 and T110. K139 contacts L-aspartate. Residues R160, H188, and Q191 each contribute to the carbamoyl phosphate site. The UMP site is built by R160 and H188. Positions 221 and 283 each coordinate UMP. R221 and R283 together coordinate L-aspartate. Carbamoyl phosphate contacts are provided by L323 and P324.

This sequence belongs to the aspartate/ornithine carbamoyltransferase superfamily. ATCase family. As to quaternary structure, homotrimer.

The protein resides in the plastid. It localises to the chloroplast. The catalysed reaction is carbamoyl phosphate + L-aspartate = N-carbamoyl-L-aspartate + phosphate + H(+). Its pathway is pyrimidine metabolism; UMP biosynthesis via de novo pathway; (S)-dihydroorotate from bicarbonate: step 2/3. Its activity is regulated as follows. Feedback inhibited by UMP. In terms of biological role, catalyzes the condensation of carbamoyl phosphate and aspartate to form carbamoyl aspartate and inorganic phosphate, the committed step in the de novo pyrimidine nucleotide biosynthesis pathway. This Oryza sativa subsp. japonica (Rice) protein is Aspartate carbamoyltransferase, chloroplastic (PYRB).